Reading from the N-terminus, the 218-residue chain is uncharacterized protein (218 aa).

The next 5 membrane-spanning stretches (helical) occupy residues 27-49, 57-77, 115-135, 142-162, and 180-200; these read IALENAGIPIPGETITLLGGFLA, GGVLIAAIAGAVLGDSCGYWV, VFFGRFVTLLRIFAGPMAGIV, FLLYNIGGASVWAAITVSLAY, and FSWFALAAVVGMVGIYFVFHF.

It belongs to the DedA family.

The protein resides in the cell membrane. This is an uncharacterized protein from Synechocystis sp. (strain ATCC 27184 / PCC 6803 / Kazusa).